We begin with the raw amino-acid sequence, 326 residues long: WD repeat-containing protein slr1409 (326 aa).

6 WD repeats span residues 47–77, 88–118, 129–159, 169–199, 210–240, and 252–282; these read GSDV…TLWT, GQKP…RLWN, PHRA…KIFT, LKSG…HLIN, TGQG…KLWN, and VPTG…RFWQ.

The chain is WD repeat-containing protein slr1409 from Synechocystis sp. (strain ATCC 27184 / PCC 6803 / Kazusa).